The chain runs to 95 residues: Putative septation protein SpoVG (95 aa).

Belongs to the SpoVG family.

In terms of biological role, could be involved in septation. The chain is Putative septation protein SpoVG from Clostridium acetobutylicum (strain ATCC 824 / DSM 792 / JCM 1419 / IAM 19013 / LMG 5710 / NBRC 13948 / NRRL B-527 / VKM B-1787 / 2291 / W).